A 452-amino-acid chain; its full sequence is Trigger factor (452 aa).

Residues Asn-170–Pro-256 enclose the PPIase FKBP-type domain.

The protein belongs to the FKBP-type PPIase family. Tig subfamily.

It is found in the cytoplasm. The enzyme catalyses [protein]-peptidylproline (omega=180) = [protein]-peptidylproline (omega=0). In terms of biological role, involved in protein export. Acts as a chaperone by maintaining the newly synthesized protein in an open conformation. Functions as a peptidyl-prolyl cis-trans isomerase. The sequence is that of Trigger factor from Borrelia garinii subsp. bavariensis (strain ATCC BAA-2496 / DSM 23469 / PBi) (Borreliella bavariensis).